Here is a 279-residue protein sequence, read N- to C-terminus: Phosphatidylglycerol--prolipoprotein diacylglyceryl transferase (279 aa).

Helical transmembrane passes span 18 to 38 (LSVRWYGIIIAVGILLGYFVA), 55 to 75 (IIFYSALFGFIAARIYFVIFQ), and 89 to 109 (IWHGGIAIHGGLIGGFIAGVI). Residue Arg-137 participates in a 1,2-diacyl-sn-glycero-3-phospho-(1'-sn-glycerol) binding. The next 2 membrane-spanning stretches (helical) occupy residues 203 to 223 (LGETFFLYLTWYSIGRFFIEG) and 235 to 255 (IRVAQLVSILLILISISLIVY).

Belongs to the Lgt family.

It localises to the cell membrane. It catalyses the reaction L-cysteinyl-[prolipoprotein] + a 1,2-diacyl-sn-glycero-3-phospho-(1'-sn-glycerol) = an S-1,2-diacyl-sn-glyceryl-L-cysteinyl-[prolipoprotein] + sn-glycerol 1-phosphate + H(+). It functions in the pathway protein modification; lipoprotein biosynthesis (diacylglyceryl transfer). In terms of biological role, catalyzes the transfer of the diacylglyceryl group from phosphatidylglycerol to the sulfhydryl group of the N-terminal cysteine of a prolipoprotein, the first step in the formation of mature lipoproteins. The protein is Phosphatidylglycerol--prolipoprotein diacylglyceryl transferase of Staphylococcus aureus (strain USA300).